Here is a 341-residue protein sequence, read N- to C-terminus: L-threonine 3-dehydrogenase (341 aa).

Residue Cys-38 participates in Zn(2+) binding. Residues Thr-40 and His-43 each act as charge relay system in the active site. Zn(2+)-binding residues include His-63, Glu-64, Cys-93, Cys-96, Cys-99, and Cys-107. NAD(+)-binding positions include Ile-175, Asp-195, Arg-200, 262-264 (LGI), and 286-287 (IY).

The protein belongs to the zinc-containing alcohol dehydrogenase family. As to quaternary structure, homotetramer. The cofactor is Zn(2+).

The protein localises to the cytoplasm. It catalyses the reaction L-threonine + NAD(+) = (2S)-2-amino-3-oxobutanoate + NADH + H(+). Its pathway is amino-acid degradation; L-threonine degradation via oxydo-reductase pathway; glycine from L-threonine: step 1/2. Functionally, catalyzes the NAD(+)-dependent oxidation of L-threonine to 2-amino-3-ketobutyrate. This is L-threonine 3-dehydrogenase from Yersinia enterocolitica serotype O:8 / biotype 1B (strain NCTC 13174 / 8081).